A 360-amino-acid polypeptide reads, in one-letter code: Protein phosphatase 1 regulatory subunit 7 (360 aa).

The disordered stretch occupies residues 1–64; that stretch reads MAAERGAGQQ…GEEDPEEEHE (64 aa). N-acetylalanine is present on Ala2. Phosphoserine occurs at positions 12, 24, 27, 44, and 47. The segment covering 17–34 has biased composition (basic and acidic residues); sequence EVDRRVESEESGDEEGKK. Over residues 53–63 the composition is skewed to acidic residues; sequence ERGEEDPEEEH. 11 LRR repeats span residues 77–98, 99–120, 121–142, 143–164, 165–186, 187–208, 209–230, 231–252, 253–274, 275–296, and 297–318; these read DAEDVDLNHYRIGKIEGFEVLK, KVKTLCLRQNLIKCIENLEELQ, SLRELDLYDNQIKKIENLEALT, ELEILDISFNLLRNIEGVDKLT, RLKKLFLVNNKISKIENLSNLH, QLQMLELGSNRIRAIENIDTLT, NLESLFLGKNKITKLQNLDALT, NLTVLSMQSNRLTKIEGLQNLV, NLRELYLSHNGIEVIEGLENNN, KLTMLDIASNRIKKIENISHLT, and ELQEFWMNDNLLESWSDLDELK. The residue at position 322 (Ser322) is a Phosphoserine. The LRRCT domain maps to 331–360; the sequence is NPLQKDPQYRRKVMLALPSVRQIDATFVRF.

The protein belongs to the SDS22 family. As to quaternary structure, interacts with PPP1CA, PPP1CB and PPP1CC/PPP1G isoform 1. In terms of tissue distribution, widely expressed.

It localises to the nucleus. Regulatory subunit of protein phosphatase 1. The protein is Protein phosphatase 1 regulatory subunit 7 (PPP1R7) of Homo sapiens (Human).